The following is a 204-amino-acid chain: uncharacterized protein (204 aa).

Residues Q109–T136 adopt a coiled-coil conformation.

This is an uncharacterized protein from Bacillus subtilis (strain 168).